The following is a 155-amino-acid chain: Secreted RxLR effector protein 38 (155 aa).

The signal sequence occupies residues 1 to 17 (MHLIYIVMAATATTLHA). The short motif at 49–64 (RFLRGAYEDVHREEER) is the RxLR-dEER element.

It belongs to the RxLR effector family.

The protein localises to the secreted. The protein resides in the host nucleus. Its subcellular location is the host cytoplasm. Its function is as follows. Secreted effector that completely suppresses the host cell death induced by cell death-inducing proteins. The polypeptide is Secreted RxLR effector protein 38 (Plasmopara viticola (Downy mildew of grapevine)).